The chain runs to 193 residues: Transcriptional regulator RamR (193 aa).

The HTH tetR-type domain occupies 7 to 66; it reads EDKKQALLEAATQAIAQSGIAASTAVIARNAGVAEGTLFRYFATKDELINTLYLHLKQDL. Positions 29–48 form a DNA-binding region, H-T-H motif; that stretch reads STAVIARNAGVAEGTLFRYF.

As to quaternary structure, homodimer. May bind DNA either as a homodimer or as a pair of homodimers. Various chemicals reduce DNA-binding in vitro, including bile acids, such as cholic and chenodeoxycholic acids, and antimicrobial drugs, such as berberine, crystal violet, dequalinium, ethidium bromide and rhodamine 6G. Binds small regulatory RNA StyR3.

Its function is as follows. Transcriptional regulator. Represses the transcription of the transcriptional activator RamA and, thereby, leads to repression of the expression of the efflux pump subunits AcrA and AcrB, and TolC. Acts by binding directly to the promoter region of the ramA gene. Promoter binding may be inhibited partially by the small regulatory RNA StyR3, perhaps thereby ensuring a basal level of expression of RamA. This chain is Transcriptional regulator RamR, found in Salmonella typhimurium (strain LT2 / SGSC1412 / ATCC 700720).